We begin with the raw amino-acid sequence, 543 residues long: MTPSELRRLCLIIRVFLAYGLDELIPLMRITLPLRIGRRCLFWMRNRHGDKPLGERLRLALQTLGPVWIKFGQMLSTRRDLFAPAIADQLALLQDRVAPFDGALARRQIEASLGGPLEQWFDDFDSQALASASIAQVHTATLRENGREVVLKVIRPDIQPIIRADVRLMYRLAGWVPKLLPDGRRLRPREVVREYEKTLLDELNLLREAANAIQLRRNFDASPMLYIPEVFSDYCRESVLVMERIYGVPVSDIAALRAQNTNMKLLAERGVQVFFTQVFRDSFFHADMHPGNIFVSYEHPQDPQYIGIDCGIVGSLNKADKRYLAENFIAFFNRDYRKVAELHVDSGWVPPDTNIEEFEFAIRTVCEPIFEKPLDQISFGHVLLNLFNTARRFNMEVQPQLVLLQKTLLYVEGLGRQLYPQLDLWTTAKPFLENWLHDQVGLPALMRALKAKAPYWSEKLPELPELLYDSLQQQRRLQHSMDSMTHRLGQQGSRQGRARYLFGIGATLLLSGTILTMVNIALWPIGLYVAGGVIWLAGWRYTR.

Positions 123–501 (DFDSQALASA…GSRQGRARYL (379 aa)) constitute a Protein kinase domain. ATP is bound by residues 129 to 137 (LASASIAQV) and lysine 152. Aspartate 287 functions as the Proton acceptor in the catalytic mechanism. The helical transmembrane segment at 517–537 (MVNIALWPIGLYVAGGVIWLA) threads the bilayer.

The protein belongs to the ABC1 family. UbiB subfamily.

The protein resides in the cell inner membrane. The protein operates within cofactor biosynthesis; ubiquinone biosynthesis [regulation]. Its function is as follows. Is probably a protein kinase regulator of UbiI activity which is involved in aerobic coenzyme Q (ubiquinone) biosynthesis. In Edwardsiella ictaluri (strain 93-146), this protein is Probable protein kinase UbiB.